The primary structure comprises 106 residues: BLOC-1-related complex subunit 7 (106 aa).

The protein belongs to the BORCS7 family. In terms of assembly, component of the BLOC-one-related complex (BORC) which is composed of BLOC1S1, BLOC1S2, BORCS5, BORCS6, BORCS7, BORCS8, KXD1 and SNAPIN.

The protein localises to the lysosome membrane. As part of the BORC complex may play a role in lysosomes movement and localization at the cell periphery. Associated with the cytosolic face of lysosomes, the BORC complex may recruit ARL8B and couple lysosomes to microtubule plus-end-directed kinesin motor. The sequence is that of BLOC-1-related complex subunit 7 from Homo sapiens (Human).